The chain runs to 520 residues: GMP synthase [glutamine-hydrolyzing] (520 aa).

In terms of domain architecture, Glutamine amidotransferase type-1 spans 9-202 (TILIIDFGSQ…VHRIVGVKPG (194 aa)). C86 serves as the catalytic Nucleophile. Active-site residues include H176 and E178. Residues 203–395 (WTMGAYREQA…LGLPDSFIGR (193 aa)) form the GMPS ATP-PPase domain. 230-236 (SGGVDSS) lines the ATP pocket.

In terms of assembly, homodimer.

The enzyme catalyses XMP + L-glutamine + ATP + H2O = GMP + L-glutamate + AMP + diphosphate + 2 H(+). It participates in purine metabolism; GMP biosynthesis; GMP from XMP (L-Gln route): step 1/1. Functionally, catalyzes the synthesis of GMP from XMP. In Brucella melitensis biotype 2 (strain ATCC 23457), this protein is GMP synthase [glutamine-hydrolyzing].